A 334-amino-acid polypeptide reads, in one-letter code: Methionine adenosyltransferase 2 subunit beta (334 aa).

NADP(+) is bound by residues 37–40 (TGLL), 60–62 (FRR), 71–72 (NL), cysteine 93, arginine 97, tyrosine 159, and leucine 185. At threonine 309 the chain carries Phosphothreonine. The required for interaction with MAT2A stretch occupies residues 319-334 (LWPFLIDKRWRQTVFH).

This sequence belongs to the dTDP-4-dehydrorhamnose reductase family. MAT2B subfamily. Heterotrimer; composed of a catalytic MAT2A homodimer that binds one regulatory MAT2B chain. Heterohexamer; composed of a central, catalytic MAT2A homotetramer flanked on either side by a regulatory MAT2B chain. NADP binding increases the affinity for MAT2A.

Its pathway is amino-acid biosynthesis; S-adenosyl-L-methionine biosynthesis; S-adenosyl-L-methionine from L-methionine: step 1/1. Functionally, regulatory subunit of S-adenosylmethionine synthetase 2, an enzyme that catalyzes the formation of S-adenosylmethionine from methionine and ATP. Regulates MAT2A catalytic activity by changing its kinetic properties, increasing its affinity for L-methionine. Can bind NADP (in vitro). The polypeptide is Methionine adenosyltransferase 2 subunit beta (MAT2B) (Pongo abelii (Sumatran orangutan)).